We begin with the raw amino-acid sequence, 80 residues long: Large ribosomal subunit protein bL31 (80 aa).

C16, C18, C38, and C41 together coordinate Zn(2+).

It belongs to the bacterial ribosomal protein bL31 family. Type A subfamily. Part of the 50S ribosomal subunit. The cofactor is Zn(2+).

In terms of biological role, binds the 23S rRNA. This is Large ribosomal subunit protein bL31 from Rhodococcus jostii (strain RHA1).